Consider the following 360-residue polypeptide: Phosphoserine aminotransferase (360 aa).

Arginine 42 is a binding site for L-glutamate. Pyridoxal 5'-phosphate is bound by residues alanine 76–serine 77, tryptophan 102, threonine 152, aspartate 172, and glutamine 195. N6-(pyridoxal phosphate)lysine is present on lysine 196. Asparagine 237–threonine 238 contributes to the pyridoxal 5'-phosphate binding site.

It belongs to the class-V pyridoxal-phosphate-dependent aminotransferase family. SerC subfamily. Homodimer. Pyridoxal 5'-phosphate serves as cofactor.

The protein resides in the cytoplasm. The catalysed reaction is O-phospho-L-serine + 2-oxoglutarate = 3-phosphooxypyruvate + L-glutamate. The enzyme catalyses 4-(phosphooxy)-L-threonine + 2-oxoglutarate = (R)-3-hydroxy-2-oxo-4-phosphooxybutanoate + L-glutamate. Its pathway is amino-acid biosynthesis; L-serine biosynthesis; L-serine from 3-phospho-D-glycerate: step 2/3. Functionally, catalyzes the reversible conversion of 3-phosphohydroxypyruvate to phosphoserine and of 3-hydroxy-2-oxo-4-phosphonooxybutanoate to phosphohydroxythreonine. The polypeptide is Phosphoserine aminotransferase (Bacillus cereus (strain ZK / E33L)).